A 693-amino-acid chain; its full sequence is Bacterial dynamin-like protein (693 aa).

Residues 1-521 (MVNQVATDRF…DNSPGWAKWA (521 aa)) lie on the Cytoplasmic side of the membrane. One can recognise a Dynamin-type G domain in the interval 66–313 (QQGVFRLLVL…QADLDGTGFP (248 aa)). The G1 motif stretch occupies residues 76-83 (GDMKRGKS). 79–84 (KRGKST) lines the GTP pocket. The tract at residues 102–103 (CT) is G2 motif. Residues 180-183 (DSPG) form a G3 motif region. Residue 235-241 (FLVNAWD) coordinates GTP. Positions 238 to 241 (NAWD) are G4 motif. Position 268 (Asn-268) is a region of interest, G5 motif. GTP is bound at residue 292–293 (SI). The interval 311–571 (GFPKFMDSLN…TAVTGILLGP (261 aa)) is middle domain. Positions 347-378 (REAVARRIPLLEQDVNELKKRIDSVEPEFNKL) form a coiled coil. An intramembrane segment occupies 522-574 (MGLLSLSKGNLAGFALAGAGFDWKNILLNYFTVIGIGGIITAVTGILLGPIGF). A paddle domain region spans residues 572–606 (IGFALLGLGVGFLQADQARRELVKTAKKELVKHLP). The Cytoplasmic portion of the chain corresponds to 575 to 693 (ALLGLGVGFL…AYSNLLAYYS (119 aa)). Positions 607 to 693 (QVAHEQSQVV…AYSNLLAYYS (87 aa)) are GED. A coiled-coil region spans residues 661-688 (ESEFNRLKNLQEDVIAQLQKIEAAYSNL).

Belongs to the TRAFAC class dynamin-like GTPase superfamily. Dynamin/Fzo/YdjA family. Mitofusin subfamily. As to quaternary structure, homodimer. Self-assembles in the presence of GMP-PNP and liposomes, and probably also in the presence of GTP.

It is found in the cell inner membrane. It carries out the reaction GTP + H2O = GDP + phosphate + H(+). Functionally, dynamin-related GTPase probably involved in membrane remodeling. Lipid and nucleotide-binding are thought to induce a large intramolecular rearrangement, leading to assembly on lipid bilayers and possible membrane curving. In the presence of the non-hydrolyzable GTP analog GMP-PNP self-assembles on a lipid bilayer; this does not stimulate subsequent GTPase activity. Does not bind lipids in the presence of GDP; perhaps GTP hydrolysis disrupts membrane-binding. The chain is Bacterial dynamin-like protein from Nostoc punctiforme (strain ATCC 29133 / PCC 73102).